The following is a 1003-amino-acid chain: MKLFLLLLFLLHISHTFTASRPISEFRALLSLKTSLTGAGDDKNSPLSSWKVSTSFCTWIGVTCDVSRRHVTSLDLSGLNLSGTLSPDVSHLRLLQNLSLAENLISGPIPPEISSLSGLRHLNLSNNVFNGSFPDEISSGLVNLRVLDVYNNNLTGDLPVSVTNLTQLRHLHLGGNYFAGKIPPSYGSWPVIEYLAVSGNELVGKIPPEIGNLTTLRELYIGYYNAFEDGLPPEIGNLSELVRFDGANCGLTGEIPPEIGKLQKLDTLFLQVNVFSGPLTWELGTLSSLKSMDLSNNMFTGEIPASFAELKNLTLLNLFRNKLHGEIPEFIGDLPELEVLQLWENNFTGSIPQKLGENGKLNLVDLSSNKLTGTLPPNMCSGNKLETLITLGNFLFGSIPDSLGKCESLTRIRMGENFLNGSIPKGLFGLPKLTQVELQDNYLSGELPVAGGVSVNLGQISLSNNQLSGPLPPAIGNFTGVQKLLLDGNKFQGPIPSEVGKLQQLSKIDFSHNLFSGRIAPEISRCKLLTFVDLSRNELSGEIPNEITAMKILNYLNLSRNHLVGSIPGSISSMQSLTSLDFSYNNLSGLVPGTGQFSYFNYTSFLGNPDLCGPYLGPCKDGVAKGGHQSHSKGPLSASMKLLLVLGLLVCSIAFAVVAIIKARSLKKASESRAWRLTAFQRLDFTCDDVLDSLKEDNIIGKGGAGIVYKGVMPNGDLVAVKRLAAMSRGSSHDHGFNAEIQTLGRIRHRHIVRLLGFCSNHETNLLVYEYMPNGSLGEVLHGKKGGHLHWDTRYKIALEAAKGLCYLHHDCSPLIVHRDVKSNNILLDSNFEAHVADFGLAKFLQDSGTSECMSAIAGSYGYIAPEYAYTLKVDEKSDVYSFGVVLLELVTGRKPVGEFGDGVDIVQWVRKMTDSNKDSVLKVLDPRLSSIPIHEVTHVFYVAMLCVEEQAVERPTMREVVQILTEIPKLPPSKDQPMTESAPESELSPKSGVQSPPDLLNL.

The signal sequence occupies residues 1–19 (MKLFLLLLFLLHISHTFTA). Residues 20 to 640 (SRPISEFRAL…HSKGPLSASM (621 aa)) are Extracellular-facing. 22 LRR repeats span residues 68–92 (RRHVTSLDLSGLNLSGTLSPDVSHL), 93–116 (RLLQNLSLAENLISGPIPPEISSL), 117–140 (SGLRHLNLSNNVFNGSFPDEISSG), 142–165 (VNLRVLDVYNNNLTGDLPVSVTNL), 166–191 (TQLRHLHLGGNYFAGKIPPSYGSWPV), 193–213 (EYLAVSGNELVGKIPPEIGNL), 215–238 (TLRELYIGYYNAFEDGLPPEIGNL), 239–262 (SELVRFDGANCGLTGEIPPEIGKL), 263–285 (QKLDTLFLQVNVFSGPLTWELGT), 286–310 (LSSLKSMDLSNNMFTGEIPASFAEL), 312–334 (NLTLLNLFRNKLHGEIPEFIGDL), 335–358 (PELEVLQLWENNFTGSIPQKLGEN), 359–382 (GKLNLVDLSSNKLTGTLPPNMCSG), 385–406 (LETLITLGNFLFGSIPDSLGKC), 407–430 (ESLTRIRMGENFLNGSIPKGLFGL), 432–454 (KLTQVELQDNYLSGELPVAGGVS), 455–480 (VNLGQISLSNNQLSGPLPPAIGNFTG), 482–502 (QKLLLDGNKFQGPIPSEVGKL), 503–526 (QQLSKIDFSHNLFSGRIAPEISRC), 527–550 (KLLTFVDLSRNELSGEIPNEITAM), 551–574 (KILNYLNLSRNHLVGSIPGSISSM), and 575–598 (QSLTSLDFSYNNLSGLVPGTGQFS). N-linked (GlcNAc...) asparagine glycosylation is found at N80, N97, N123, N130, N153, and N164. N-linked (GlcNAc...) asparagine glycosylation is found at N212 and N237. N-linked (GlcNAc...) asparagine glycosylation is found at N312 and N346. N-linked (GlcNAc...) asparagine glycosylation is present at N420. N477 carries N-linked (GlcNAc...) asparagine glycosylation. N-linked (GlcNAc...) asparagine glycosylation is found at N557, N586, and N601. A helical membrane pass occupies residues 641-661 (KLLLVLGLLVCSIAFAVVAII). Over 662–1003 (KARSLKKASE…VQSPPDLLNL (342 aa)) the chain is Cytoplasmic. The residue at position 686 (T686) is a Phosphothreonine. The Protein kinase domain maps to 694–971 (LKEDNIIGKG…VQILTEIPKL (278 aa)). Residues 700 to 708 (IGKGGAGIV) and K722 each bind ATP. Residues Y769 and Y807 each carry the phosphotyrosine modification. D820 functions as the Proton acceptor in the catalytic mechanism. S855 is subject to Phosphoserine. Phosphotyrosine is present on residues Y863 and Y870. Phosphothreonine is present on T871. The disordered stretch occupies residues 969-1003 (PKLPPSKDQPMTESAPESELSPKSGVQSPPDLLNL). Residue S996 is modified to Phosphoserine.

Belongs to the protein kinase superfamily. Ser/Thr protein kinase family. In terms of assembly, self-interacts and interacts with BAM2 and CLV1. Binds to the CLV3, CLE5, CLE11, CLE18, CLE19, CLE22, CLE25, CLE26, CLE40, CLE41 and CLE42 mature peptides, probably via its extracellular leucine-rich repeat region. In terms of tissue distribution, expressed in seedlings, roots, leaves, inflorescences, flowers and siliques.

Its subcellular location is the cell membrane. The catalysed reaction is L-seryl-[protein] + ATP = O-phospho-L-seryl-[protein] + ADP + H(+). It catalyses the reaction L-threonyl-[protein] + ATP = O-phospho-L-threonyl-[protein] + ADP + H(+). In terms of biological role, necessary for male gametophyte development, as well as ovule specification and function. Involved in cell-cell communication process required during early anther development, and regulating cell division and differentiation to organize cell layers. Required for the development of high-ordered vascular strands within the leaf and a correlated control of leaf shape, size and symmetry. May regulate the CLV1-dependent CLV3-mediated signaling in meristems maintenance. The protein is Leucine-rich repeat receptor-like serine/threonine-protein kinase BAM1 (BAM1) of Arabidopsis thaliana (Mouse-ear cress).